The following is a 636-amino-acid chain: Chaperone protein DnaK (636 aa).

The residue at position 198 (threonine 198) is a Phosphothreonine; by autocatalysis. Residues 602-613 (QPAGEEQAGAAA) show a composition bias toward low complexity. The interval 602 to 636 (QPAGEEQAGAAAHEGEAKGEKVVDADFEEVKEDKK) is disordered. Over residues 614–625 (HEGEAKGEKVVD) the composition is skewed to basic and acidic residues. A compositionally biased stretch (acidic residues) spans 626–636 (ADFEEVKEDKK).

The protein belongs to the heat shock protein 70 family.

In terms of biological role, acts as a chaperone. In Geotalea daltonii (strain DSM 22248 / JCM 15807 / FRC-32) (Geobacter daltonii), this protein is Chaperone protein DnaK.